Reading from the N-terminus, the 476-residue chain is Dermokine (476 aa).

Residues 1 to 21 (MKFQGPLACLLLALCLGSGEA) form the signal peptide. Composition is skewed to gly residues over residues 153–169 (SQGG…GGLG), 193–202 (WGQGGNGGPP), 236–259 (GSGG…GSGS), and 268–298 (SSGG…GSRG). A disordered region spans residues 153–351 (SQGGLGGQGQ…ESGIQNSETS (199 aa)). A compositionally biased stretch (low complexity) spans 299–315 (DSGSESSWGSSTGSSSG). Over residues 316 to 326 (NHGGSGGGNGH) the composition is skewed to gly residues.

The protein belongs to the dermokine family. Homooligomer. Seems to be able to homodimerize and homotrimerize. In terms of processing, O-glycosylated. In terms of tissue distribution, expressed in epidermis; in the spinous and granular layers and in placenta. Also found in the epithelia of the small intestine, macrophages of the lung and endothelial cells of the lung. Isoform 15 is expressed in epidermis and placenta. Isoform 1 is expressed in epidermis.

Its subcellular location is the secreted. Its function is as follows. May act as a soluble regulator of keratinocyte differentiation. The sequence is that of Dermokine (DMKN) from Homo sapiens (Human).